The sequence spans 298 residues: Probable alpha-L-glutamate ligase (298 aa).

One can recognise an ATP-grasp domain in the interval M104–E287. Residues K141, E178 to Y179, D187, and R211 to N213 contribute to the ATP site. Positions 248, 260, and 262 each coordinate Mg(2+). The Mn(2+) site is built by D248, E260, and N262.

It belongs to the RimK family. It depends on Mg(2+) as a cofactor. The cofactor is Mn(2+).

This chain is Probable alpha-L-glutamate ligase, found in Aeromonas salmonicida (strain A449).